The sequence spans 458 residues: Argininosuccinate lyase (458 aa).

Belongs to the lyase 1 family. Argininosuccinate lyase subfamily.

Its subcellular location is the cytoplasm. It catalyses the reaction 2-(N(omega)-L-arginino)succinate = fumarate + L-arginine. The protein operates within amino-acid biosynthesis; L-arginine biosynthesis; L-arginine from L-ornithine and carbamoyl phosphate: step 3/3. This Salmonella heidelberg (strain SL476) protein is Argininosuccinate lyase.